Consider the following 174-residue polypeptide: Shikimate kinase (174 aa).

10–15 (GSGKTA) contributes to the ATP binding site. Residue Thr14 coordinates Mg(2+). Substrate-binding residues include Asp32, Arg56, and Gly78. Arg118 provides a ligand contact to ATP. Arg137 lines the substrate pocket. Arg154 contributes to the ATP binding site.

The protein belongs to the shikimate kinase family. In terms of assembly, monomer. The cofactor is Mg(2+).

Its subcellular location is the cytoplasm. It catalyses the reaction shikimate + ATP = 3-phosphoshikimate + ADP + H(+). Its pathway is metabolic intermediate biosynthesis; chorismate biosynthesis; chorismate from D-erythrose 4-phosphate and phosphoenolpyruvate: step 5/7. Its function is as follows. Catalyzes the specific phosphorylation of the 3-hydroxyl group of shikimic acid using ATP as a cosubstrate. The polypeptide is Shikimate kinase (Symbiobacterium thermophilum (strain DSM 24528 / JCM 14929 / IAM 14863 / T)).